The chain runs to 300 residues: MEFWGLEVKPGSTVKCEPGYGFVLHLSQAALGESKKSDNALMYVKIDDQKLAIGTLSVDKNPHIQFDLIFDKEFELSHTSKTTSVFFTGYKVEQPFEEDEMDLDSEDEDEELNVPAVKENGKADEKKQKSQEKAVAAPSKSSPDSKKSKDDDDSDEDETDDSDEDETDDSDEGLSPEEGDDDSSDEDDTSDDEEEDTPTPKKPEVGKKRAAESSVLKTPLSDKKAKVATPSSQKTGGKKGAAVHVATPHPAKGKTIVNNDKSVKSPKSAPKSGVPCKSCSKSFISETAPQAHSKAKHGGK.

The segment covering 98–112 (EDEMDLDSEDEDEEL) has biased composition (acidic residues). Positions 98–300 (EDEMDLDSED…AHSKAKHGGK (203 aa)) are disordered. Basic and acidic residues predominate over residues 119 to 132 (ENGKADEKKQKSQE). The span at 151–197 (DDDSDEDETDDSDEDETDDSDEGLSPEEGDDDSSDEDDTSDDEEEDT) shows a compositional bias: acidic residues. Residues 198 to 211 (PTPKKPEVGKKRAA) show a composition bias toward basic and acidic residues. Residues 265–275 (SPKSAPKSGVP) show a composition bias toward low complexity. The C2H2-type zinc-finger motif lies at 274–297 (VPCKSCSKSFISETAPQAHSKAKH). Polar residues predominate over residues 279-290 (CSKSFISETAPQ).

The protein belongs to the histone deacetylase HD2 family. Multimer. Possibly forms a homotrimer with HDT1 and/or HDT2.

The protein resides in the nucleus. It is found in the nucleolus. Mediates the deacetylation of lysine residues on the N-terminal part of the core histones (H2A, H2B, H3 and H4). Histone deacetylation gives a tag for epigenetic repression and plays an important role in transcriptional regulation, cell cycle progression and developmental events. The chain is Histone deacetylase HDT3 (HDT3) from Zea mays (Maize).